Reading from the N-terminus, the 564-residue chain is Phenylalanine--tRNA ligase beta subunit (564 aa).

Residues 286 to 362 (YFQNSLKINV…IGKGLDNFKS (77 aa)) form the B5 domain. Mg(2+) is bound by residues Asp-340, Asp-346, Glu-349, and Glu-350.

This sequence belongs to the phenylalanyl-tRNA synthetase beta subunit family. Type 2 subfamily. In terms of assembly, tetramer of two alpha and two beta subunits. Mg(2+) serves as cofactor.

It is found in the cytoplasm. It carries out the reaction tRNA(Phe) + L-phenylalanine + ATP = L-phenylalanyl-tRNA(Phe) + AMP + diphosphate + H(+). In Borrelia recurrentis (strain A1), this protein is Phenylalanine--tRNA ligase beta subunit.